Here is a 293-residue protein sequence, read N- to C-terminus: Acetyl-coenzyme A carboxylase carboxyl transferase subunit beta (293 aa).

In terms of domain architecture, CoA carboxyltransferase N-terminal spans 29–293; the sequence is LWVKCSECSQ…GVKELAEANT (265 aa). Zn(2+) is bound by residues C33, C36, C52, and C55. The segment at 33–55 adopts a C4-type zinc-finger fold; that stretch reads CSECSQVAYRKDLISNFNVCSNC.

This sequence belongs to the AccD/PCCB family. In terms of assembly, acetyl-CoA carboxylase is a heterohexamer composed of biotin carboxyl carrier protein (AccB), biotin carboxylase (AccC) and two subunits each of ACCase subunit alpha (AccA) and ACCase subunit beta (AccD). Zn(2+) is required as a cofactor.

Its subcellular location is the cytoplasm. It catalyses the reaction N(6)-carboxybiotinyl-L-lysyl-[protein] + acetyl-CoA = N(6)-biotinyl-L-lysyl-[protein] + malonyl-CoA. Its pathway is lipid metabolism; malonyl-CoA biosynthesis; malonyl-CoA from acetyl-CoA: step 1/1. Component of the acetyl coenzyme A carboxylase (ACC) complex. Biotin carboxylase (BC) catalyzes the carboxylation of biotin on its carrier protein (BCCP) and then the CO(2) group is transferred by the transcarboxylase to acetyl-CoA to form malonyl-CoA. This Prochlorococcus marinus (strain MIT 9301) protein is Acetyl-coenzyme A carboxylase carboxyl transferase subunit beta.